The following is a 247-amino-acid chain: Uridylate kinase (247 aa).

15-18 is a binding site for ATP; it reads KLSG. Residues 23–28 are involved in allosteric activation by GTP; sequence GEEGFG. A UMP-binding site is contributed by G57. ATP contacts are provided by G58 and R62. UMP is bound by residues D77 and 138 to 145; that span reads TGNPFCTT. 3 residues coordinate ATP: T165, Y171, and D174.

Belongs to the UMP kinase family. In terms of assembly, homohexamer.

Its subcellular location is the cytoplasm. The catalysed reaction is UMP + ATP = UDP + ADP. It functions in the pathway pyrimidine metabolism; CTP biosynthesis via de novo pathway; UDP from UMP (UMPK route): step 1/1. Allosterically activated by GTP. Inhibited by UTP. Catalyzes the reversible phosphorylation of UMP to UDP. This Shewanella loihica (strain ATCC BAA-1088 / PV-4) protein is Uridylate kinase.